We begin with the raw amino-acid sequence, 391 residues long: Polyisoprenyl-teichoic acid--peptidoglycan teichoic acid transferase TagV (391 aa).

Residues 1-23 (MAERVRVRVRKKKKSKRRKILKR) are Cytoplasmic-facing. Residues 24–44 (IMLLFALALLVVVGLGGYKLY) traverse the membrane as a helical; Signal-anchor for type II membrane protein segment. Over 45-391 (KTINAADESY…TTNSTTDSSY (347 aa)) the chain is Extracellular. The segment at 329 to 391 (DYTPDTSTGT…TTNSTTDSSY (63 aa)) is disordered. Residues 333–391 (DTSTGTSGTEDGTDSSSSSGSTGSTGTTTDGTTNGSSYSNDSSTSSNNSTTNSTTDSSY) show a composition bias toward low complexity.

This sequence belongs to the LytR/CpsA/Psr (LCP) family.

Its subcellular location is the cell membrane. The protein operates within cell wall biogenesis. Its function is as follows. May catalyze the final step in cell wall teichoic acid biosynthesis, the transfer of the anionic cell wall polymers (APs) from their lipid-linked precursor to the cell wall peptidoglycan (PG). The polypeptide is Polyisoprenyl-teichoic acid--peptidoglycan teichoic acid transferase TagV (Bacillus subtilis (strain 168)).